A 74-amino-acid polypeptide reads, in one-letter code: Peptide BmKb2 (74 aa).

The N-terminal stretch at 1-22 (MEIKYLLTVFLVLLIVSDHCQA) is a signal peptide. Lys40 carries the post-translational modification Lysine amide. Residues 46 to 74 (DLNGQIDHFKNFRKRDAELEELLSKLPIY) constitute a propeptide that is removed on maturation.

This sequence belongs to the non-disulfide-bridged peptide (NDBP) superfamily. Short antimicrobial peptide (group 4) family.

Its subcellular location is the secreted. It is found in the target cell membrane. Functionally, antibacterial peptide. This peptide gene is up-regulated at the transcriptional level after the venom gland is challenged by Gram-positive bacteria. The polypeptide is Peptide BmKb2 (Olivierus martensii (Manchurian scorpion)).